We begin with the raw amino-acid sequence, 215 residues long: High mobility group protein B1 (215 aa).

The HMG box 1 DNA-binding region spans 9 to 79 (PRGKMSSYAF…RYEKEMKNYV (71 aa)). The residue at position 23 (C23) is a Cysteine sulfonic acid (-SO3H); alternate. C23 and C45 are joined by a disulfide. Residues 27 to 43 (HKKKHPDASVNFSEFSK) form an NLS 1 region. Positions 27 to 43 (HKKKHPDASVNFSEFSK) match the Nuclear localization signal (NLS) 1 motif. Position 45 is a cysteine sulfonic acid (-SO3H); alternate (C45). The tract at residues 75-95 (MKNYVPPKGETKKKFKDPNAP) is disordered. Residues 83–94 (GETKKKFKDPNA) show a composition bias toward basic and acidic residues. Residues 95–163 (PKRPPSAFFL…KYEKDIAAYR (69 aa)) constitute a DNA-binding region (HMG box 2). C106 carries the post-translational modification Cysteine sulfonic acid (-SO3H). Residues 166–179 (GKVDAGKKVVAKAE) show a composition bias toward basic and acidic residues. The interval 166-215 (GKVDAGKKVVAKAEKSKKKKEEEEDEDEDEEDEEDEEEEEEEEEDDDDDE) is disordered. The interval 178-184 (AEKSKKK) is NLS 2. The Nuclear localization signal (NLS) 2 motif lies at 178–184 (AEKSKKK). A compositionally biased stretch (acidic residues) spans 187–215 (EEEDEDEDEEDEEDEEEEEEEEEDDDDDE). Residues 196–210 (EDEEDEEEEEEEEED) form an involved in intramolecular interaction with K-3 region. The interval 211-215 (DDDDE) is involved in interaction with histone H3.

The protein belongs to the HMGB family. Reduction/oxidation of cysteine residues Cys-23, Cys-45 and Cys-106 and a possible intramolecular disulfide bond involving Cys-23 and Cys-45 give rise to different redox forms with specific functional activities: 1- fully reduced HMGB1 (HMGB1C23hC45hC106h), 2- disulfide HMGB1 (HMGB1C23-C45C106h) and 3- sulfonyl HMGB1 (HMGB1C23soC45soC106so).

It is found in the nucleus. The protein localises to the chromosome. It localises to the cytoplasm. Its subcellular location is the secreted. In terms of biological role, multifunctional redox sensitive protein with various roles in different cellular compartments. Nuclear functions are attributed to fully reduced HGMB1. Associates with chromatin and binds DNA with a preference to non-canonical DNA structures such as single-stranded DNA, DNA-containing cruciforms or bent structures, supercoiled DNA and ZDNA. Can bent DNA and enhance DNA flexibility by looping thus providing a mechanism to promote activities on various gene promoters. Can restructure the canonical nucleosome. Proposed to be an universal biosensor for nucleic acids. May promote inflammatory response to sterile and infectious signals and may be involved in the coordination and integration of innate and adaptive immune responses. In the cytoplasm may function as sensor and/or chaperone for immunogenic nucleic acids, and mediate autophagy. May act as danger associated molecular pattern (DAMP) molecule that amplifies immune responses during tissue injury. The polypeptide is High mobility group protein B1 (HMGB1) (Gallus gallus (Chicken)).